Consider the following 24-residue polypeptide: Brevinin-1PTa (24 aa).

Cysteines 18 and 24 form a disulfide.

In terms of tissue distribution, expressed by the skin glands.

It localises to the secreted. Its function is as follows. Has antibacterial activity against the Gram-positive bacterium S.aureus ATCC 25923 (MIC=3 uM) and the Gram-negative bacterium E.coli ATCC 25726 (MIC=24 uM). The sequence is that of Brevinin-1PTa from Pulchrana picturata (Malaysian fire frog).